Consider the following 155-residue polypeptide: Small ribosomal subunit protein uS7c (155 aa).

This sequence belongs to the universal ribosomal protein uS7 family. As to quaternary structure, part of the 30S ribosomal subunit.

Its subcellular location is the plastid. The protein resides in the chloroplast. One of the primary rRNA binding proteins, it binds directly to 16S rRNA where it nucleates assembly of the head domain of the 30S subunit. This Lilium superbum (Turk's cap lily) protein is Small ribosomal subunit protein uS7c (rps7).